The sequence spans 172 residues: Protein GrpE (172 aa).

The interval 1-24 is disordered; that stretch reads MNQDHPEFDSEDLAQNPPETDPLK.

This sequence belongs to the GrpE family. Homodimer.

The protein resides in the cytoplasm. Participates actively in the response to hyperosmotic and heat shock by preventing the aggregation of stress-denatured proteins, in association with DnaK and GrpE. It is the nucleotide exchange factor for DnaK and may function as a thermosensor. Unfolded proteins bind initially to DnaJ; upon interaction with the DnaJ-bound protein, DnaK hydrolyzes its bound ATP, resulting in the formation of a stable complex. GrpE releases ADP from DnaK; ATP binding to DnaK triggers the release of the substrate protein, thus completing the reaction cycle. Several rounds of ATP-dependent interactions between DnaJ, DnaK and GrpE are required for fully efficient folding. The chain is Protein GrpE from Xanthomonas oryzae pv. oryzae (strain PXO99A).